The primary structure comprises 292 residues: N-acetylneuraminate lyase (292 aa).

Residues Ser-47 and Thr-48 each contribute to the aceneuramate site. Tyr-136 serves as the catalytic Proton donor. The active-site Schiff-base intermediate with substrate is the Lys-164. Aceneuramate is bound by residues Thr-166, Gly-188, Asp-190, Glu-191, and Ser-207.

It belongs to the DapA family. NanA subfamily. In terms of assembly, homotetramer.

It is found in the cytoplasm. The catalysed reaction is aceneuramate = aldehydo-N-acetyl-D-mannosamine + pyruvate. It functions in the pathway amino-sugar metabolism; N-acetylneuraminate degradation; D-fructose 6-phosphate from N-acetylneuraminate: step 1/5. Functionally, catalyzes the reversible aldol cleavage of N-acetylneuraminic acid (sialic acid; Neu5Ac) to form pyruvate and N-acetylmannosamine (ManNAc) via a Schiff base intermediate. The sequence is that of N-acetylneuraminate lyase from Actinobacillus pleuropneumoniae serotype 3 (strain JL03).